Here is a 751-residue protein sequence, read N- to C-terminus: Ribosomal RNA large subunit methyltransferase K/L (751 aa).

The 112-residue stretch at 44 to 155 (LAYRTCLWSR…KNKLVLSIDL (112 aa)) folds into the THUMP domain.

The protein belongs to the methyltransferase superfamily. RlmKL family.

It is found in the cytoplasm. It catalyses the reaction guanosine(2445) in 23S rRNA + S-adenosyl-L-methionine = N(2)-methylguanosine(2445) in 23S rRNA + S-adenosyl-L-homocysteine + H(+). It carries out the reaction guanosine(2069) in 23S rRNA + S-adenosyl-L-methionine = N(2)-methylguanosine(2069) in 23S rRNA + S-adenosyl-L-homocysteine + H(+). Specifically methylates the guanine in position 2445 (m2G2445) and the guanine in position 2069 (m7G2069) of 23S rRNA. In Cellvibrio japonicus (strain Ueda107) (Pseudomonas fluorescens subsp. cellulosa), this protein is Ribosomal RNA large subunit methyltransferase K/L.